The sequence spans 158 residues: Ribosome maturation factor RimP (158 aa).

Belongs to the RimP family.

It is found in the cytoplasm. Required for maturation of 30S ribosomal subunits. The protein is Ribosome maturation factor RimP of Pseudomonas putida (strain ATCC 47054 / DSM 6125 / CFBP 8728 / NCIMB 11950 / KT2440).